Consider the following 412-residue polypeptide: tRNA (guanine-N(7)-)-methyltransferase non-catalytic subunit WDR4 (412 aa).

A2 is subject to N-acetylalanine. WD repeat units follow at residues 3–40 (GSVG…IYDC), 50–90 (NKGE…LFRT), 94–131 (QCLS…SFSV), 137–174 (CGRL…VSWA), 180–218 (IESF…LWEY), 230–273 (ASLQ…IFQL), and 319–373 (PVGD…SYLK). Positions 377 to 412 (ERLQQQLEKKQRRRSPPPGPDGHAKKMRPGEATLSC) are disordered. Phosphoserine is present on residues S391 and S411.

It belongs to the WD repeat TRM82 family. As to quaternary structure, non-catalytic component of the METTL1-WDR4 complex, composed of METTL1 and WDR4. Interacts with FEN1; the interaction is direct.

The protein localises to the nucleus. Its subcellular location is the chromosome. It functions in the pathway tRNA modification; N(7)-methylguanine-tRNA biosynthesis. In terms of biological role, non-catalytic component of the METTL1-WDR4 methyltransferase complex required for the formation of N(7)-methylguanine in a subset of RNA species, such as tRNAs, mRNAs and microRNAs (miRNAs). In the METTL1-WDR4 methyltransferase complex, WDR4 acts as a scaffold for tRNA-binding. Required for the formation of N(7)-methylguanine at position 46 (m7G46) in a large subset of tRNAs that contain the 5'-RAGGU-3' motif within the variable loop. M7G46 interacts with C13-G22 in the D-loop to stabilize tRNA tertiary structure and protect tRNAs from decay. Also required for the formation of N(7)-methylguanine at internal sites in a subset of mRNAs. Also required for methylation of a specific subset of miRNAs, such as let-7. Independently of METTL1, also plays a role in genome stability: localizes at the DNA replication site and regulates endonucleolytic activities of FEN1. The sequence is that of tRNA (guanine-N(7)-)-methyltransferase non-catalytic subunit WDR4 from Homo sapiens (Human).